The following is a 576-amino-acid chain: Colicin-E7 (576 aa).

Disordered stretches follow at residues 1–75, 421–478, and 506–557; these read MSGG…GGGS, SSAL…PVPD, and DPEL…GVYD. A compositionally biased stretch (gly residues) spans 19–35; sequence NINGGPTGLGGNGGASD. Over residues 36-45 the composition is skewed to low complexity; sequence GSGWSSENNP. Over residues 46-75 the composition is skewed to gly residues; sequence WGGGSGSGVHWGGGSGHGNGGGNSNSGGGS. Basic and acidic residues-rich tracts occupy residues 424–447 and 535–548; these read LERR…ESKR and SGKR…HEKP. The Zn(2+) site is built by histidine 544, histidine 569, and histidine 573.

The protein belongs to the colicin/pyosin nuclease family.

In terms of biological role, this plasmid-coded bactericidal protein is an endonuclease active on both single- and double-stranded DNA but with undefined specificity. Its function is as follows. Colicins are polypeptide toxins produced by and active against E.coli and closely related bacteria. The polypeptide is Colicin-E7 (colE7) (Escherichia coli).